Reading from the N-terminus, the 192-residue chain is Thymidine kinase (192 aa).

ATP-binding positions include 9-16 (SAMNAGKS) and 87-90 (DECQ). Glu-88 functions as the Proton acceptor in the catalytic mechanism. Residues Cys-145, Cys-147, Cys-182, and His-185 each contribute to the Zn(2+) site.

This sequence belongs to the thymidine kinase family. Homotetramer.

It is found in the cytoplasm. The catalysed reaction is thymidine + ATP = dTMP + ADP + H(+). The polypeptide is Thymidine kinase (Vibrio vulnificus (strain YJ016)).